A 489-amino-acid chain; its full sequence is L-asparagine permease 1 (489 aa).

Helical transmembrane passes span glutamine 25–glycine 45, lysine 49–leucine 69, alanine 100–isoleucine 120, isoleucine 137–phenylalanine 157, phenylalanine 162–phenylalanine 182, tryptophan 210–valine 230, isoleucine 255–tyrosine 275, isoleucine 289–serine 309, tyrosine 344–lysine 364, phenylalanine 369–leucine 389, serine 413–serine 433, and threonine 439–valine 459.

Belongs to the amino acid-polyamine-organocation (APC) superfamily. Amino acid transporter (AAT) (TC 2.A.3.1) family.

Its subcellular location is the cell membrane. This Mycobacterium tuberculosis (strain CDC 1551 / Oshkosh) protein is L-asparagine permease 1 (ansP1).